Here is a 374-residue protein sequence, read N- to C-terminus: Organelle RRM domain-containing protein 1, chloroplastic (374 aa).

The transit peptide at 1–54 (MEALIASTSFFVPISNSSSSHIINNRFFPSFYSPNLNFGTFRKTSLSSSHLVFS) directs the protein to the chloroplast. Residues 258–271 (KDYEGDSTQDSRDQ) show a composition bias toward basic and acidic residues. Positions 258 to 279 (KDYEGDSTQDSRDQDDSESPPV) are disordered. An RRM domain is found at 282-360 (KKLFITGLSF…WMIVVDVAKT (79 aa)).

As to quaternary structure, interacts with PCMP-H51/CRR28 and PCMP-H12/OTP82. Interacts with MORF8/RIP1, MORF2/RIP2 and VAR3/OZ1.

The protein localises to the plastid. The protein resides in the chloroplast. Involved in C-to-U editing of chloroplastic RNA. Functions as major chloroplastic editing factor. Controls 62 percent of the chloroplastic editing sites. Binds RNA close to ORRM1-dependent editing sites in vitro. Binds the editing recognition trans-factors PCMP-H51/CRR28 and PCMP-H12/OTP82. The protein is Organelle RRM domain-containing protein 1, chloroplastic of Arabidopsis thaliana (Mouse-ear cress).